We begin with the raw amino-acid sequence, 72 residues long: Translation initiation factor IF-1 (72 aa).

Positions 1 to 72 (MAKEESIEIE…TKGRITYRYK (72 aa)) constitute an S1-like domain.

It belongs to the IF-1 family. As to quaternary structure, component of the 30S ribosomal translation pre-initiation complex which assembles on the 30S ribosome in the order IF-2 and IF-3, IF-1 and N-formylmethionyl-tRNA(fMet); mRNA recruitment can occur at any time during PIC assembly.

The protein resides in the cytoplasm. One of the essential components for the initiation of protein synthesis. Stabilizes the binding of IF-2 and IF-3 on the 30S subunit to which N-formylmethionyl-tRNA(fMet) subsequently binds. Helps modulate mRNA selection, yielding the 30S pre-initiation complex (PIC). Upon addition of the 50S ribosomal subunit IF-1, IF-2 and IF-3 are released leaving the mature 70S translation initiation complex. The polypeptide is Translation initiation factor IF-1 (Chlorobium chlorochromatii (strain CaD3)).